We begin with the raw amino-acid sequence, 61 residues long: Large ribosomal subunit protein eL29y (61 aa).

Residues 1 to 61 (MAKSKNHTAH…KSGENAGVEE (61 aa)) form a disordered region. The span at 15–31 (KAHKNGIKKPRRHRHTP) shows a compositional bias: basic residues.

Belongs to the eukaryotic ribosomal protein eL29 family.

In Arabidopsis thaliana (Mouse-ear cress), this protein is Large ribosomal subunit protein eL29y (RPL29B).